The primary structure comprises 382 residues: Glycerate dehydrogenase (382 aa).

NAD(+) is bound by residues 175-176 (RI), 271-273 (CSR), and aspartate 297. The active site involves arginine 273. The active site involves glutamate 302. The Proton donor role is filled by histidine 320. 320 to 323 (HIAS) serves as a coordination point for NAD(+).

Belongs to the D-isomer specific 2-hydroxyacid dehydrogenase family.

Its subcellular location is the peroxisome. It carries out the reaction (R)-glycerate + NAD(+) = 3-hydroxypyruvate + NADH + H(+). The protein operates within photosynthesis; photorespiration; 3-phospho-D-glycerate from glycine: step 3/4. The chain is Glycerate dehydrogenase (HPR-A) from Cucumis sativus (Cucumber).